The primary structure comprises 520 residues: 2-isopropylmalate synthase (520 aa).

One can recognise a Pyruvate carboxyltransferase domain in the interval 12 to 274 (VVIFDTTLRD…WCNVESTMLT (263 aa)). Mn(2+) contacts are provided by Asp21, His209, His211, and Asn245. A regulatory domain region spans residues 398–520 (KLTSLTVIAG…RDVPSAAAAS (123 aa)).

It belongs to the alpha-IPM synthase/homocitrate synthase family. LeuA type 1 subfamily. Homodimer. Mn(2+) is required as a cofactor.

It is found in the cytoplasm. The enzyme catalyses 3-methyl-2-oxobutanoate + acetyl-CoA + H2O = (2S)-2-isopropylmalate + CoA + H(+). Its pathway is amino-acid biosynthesis; L-leucine biosynthesis; L-leucine from 3-methyl-2-oxobutanoate: step 1/4. In terms of biological role, catalyzes the condensation of the acetyl group of acetyl-CoA with 3-methyl-2-oxobutanoate (2-ketoisovalerate) to form 3-carboxy-3-hydroxy-4-methylpentanoate (2-isopropylmalate). This is 2-isopropylmalate synthase from Nitrobacter hamburgensis (strain DSM 10229 / NCIMB 13809 / X14).